Consider the following 377-residue polypeptide: MRAIGVFEYITLRAVLACATALLIGLVAGPRVIRRLTEMKIGQAVRAYGPESHLVKTGTPTMGGALILIAIAISTLLWADWINRFVWVVLLVTFGFGWIGWMDDYRKVVYRDPEGMPARQKFFWQATIGLVAAVYLAFAVSAPANTELWPLFKAWVGSGFTMPLPTRADLIVPFFKSVSYPLGVLGFVALTWAVIVGTSNAVNLTDGLDGLAIMPTVMVGSALGIFAYVVGRVDYSKYLLFPYIPGAAELMVLCAAIGGAGLAFLWFNAYPAQVFMGDVGALALGGALGTIAVIVRQEIVLFIMGGVFVVETLSVMVQVTWFKYTKRKYGQGRRIFRMAPLHHHFEVGGWKETQVVVRFWIITMMLVLVGLSTLKLR.

A run of 11 helical transmembrane segments spans residues 9 to 29 (YITL…LVAG), 62 to 82 (MGGA…ADWI), 85 to 105 (FVWV…MDDY), 122 to 142 (FFWQ…AVSA), 155 to 175 (WVGS…VPFF), 178 to 198 (VSYP…IVGT), 210 to 230 (GLAI…AYVV), 247 to 267 (AAEL…FLWF), 274 to 294 (VFMG…IAVI), 299 to 319 (IVLF…MVQV), and 354 to 374 (QVVV…LSTL).

It belongs to the glycosyltransferase 4 family. MraY subfamily. Requires Mg(2+) as cofactor.

Its subcellular location is the cell inner membrane. The enzyme catalyses UDP-N-acetyl-alpha-D-muramoyl-L-alanyl-gamma-D-glutamyl-meso-2,6-diaminopimeloyl-D-alanyl-D-alanine + di-trans,octa-cis-undecaprenyl phosphate = di-trans,octa-cis-undecaprenyl diphospho-N-acetyl-alpha-D-muramoyl-L-alanyl-D-glutamyl-meso-2,6-diaminopimeloyl-D-alanyl-D-alanine + UMP. It participates in cell wall biogenesis; peptidoglycan biosynthesis. In terms of biological role, catalyzes the initial step of the lipid cycle reactions in the biosynthesis of the cell wall peptidoglycan: transfers peptidoglycan precursor phospho-MurNAc-pentapeptide from UDP-MurNAc-pentapeptide onto the lipid carrier undecaprenyl phosphate, yielding undecaprenyl-pyrophosphoryl-MurNAc-pentapeptide, known as lipid I. This is Phospho-N-acetylmuramoyl-pentapeptide-transferase from Bordetella parapertussis (strain 12822 / ATCC BAA-587 / NCTC 13253).